Here is an 830-residue protein sequence, read N- to C-terminus: Heavy metal tolerance protein (830 aa).

The N-terminal stretch at 1–27 (MVLRYNSPRLNILELVLLYVGFFSIGS) is a signal peptide. 3 helical membrane passes run 51–71 (PIGI…VDIS), 88–108 (TTVV…ISCA), and 126–146 (LSVL…IVYS). N-linked (GlcNAc...) asparagine glycosylation occurs at N150. The next 3 membrane-spanning stretches (helical) occupy residues 156 to 176 (IVLA…AIYL), 263 to 283 (FQIF…ILAP), and 304 to 324 (DVIL…IGSL). An ABC transmembrane type-1 domain is found at 265–550 (IFICIVLLFL…FGTLYRSLQN (286 aa)). A glycan (N-linked (GlcNAc...) asparagine) is linked at N350. The next 2 helical transmembrane spans lie at 381–401 (VVFQ…YFFI) and 403–423 (FDIY…YVTV). Glutathione is bound by residues 429-433 (RTEAR), 492-495 (NIVQ), and G542. A helical transmembrane segment spans residues 490–511 (FLNIVQGGIFTFSLAIACLLSA). Positions 584 to 818 (VIFSHVSFAY…DGGAYKKMWF (235 aa)) constitute an ABC transporter domain. Residues Y593 and 617–628 (GESGGGKSTIMR) each bind ATP.

Belongs to the ABC transporter superfamily. ABCB family. Heavy Metal importer (TC 3.A.1.210) subfamily.

Its subcellular location is the vacuole membrane. In terms of biological role, involved in metal tolerance. Probably involved in the transport of metal-bound phytochelatins. Compartmentalizes cadmium within vacuoles, thereby protecting cells from cadmium toxicity. The chain is Heavy metal tolerance protein (hmt1) from Schizosaccharomyces pombe (strain 972 / ATCC 24843) (Fission yeast).